A 358-amino-acid polypeptide reads, in one-letter code: Branched-chain amino acid aminotransferase gloG (358 aa).

Arg91 is a pyridoxal 5'-phosphate binding site. Lys195 functions as the Proton acceptor in the catalytic mechanism. Position 195 is an N6-(pyridoxal phosphate)lysine (Lys195). Position 231 (Glu231) interacts with pyridoxal 5'-phosphate.

The protein belongs to the class-IV pyridoxal-phosphate-dependent aminotransferase family. The cofactor is pyridoxal 5'-phosphate.

The catalysed reaction is L-isoleucine + 2-oxoglutarate = (S)-3-methyl-2-oxopentanoate + L-glutamate. It carries out the reaction L-leucine + 2-oxoglutarate = 4-methyl-2-oxopentanoate + L-glutamate. The enzyme catalyses L-valine + 2-oxoglutarate = 3-methyl-2-oxobutanoate + L-glutamate. It functions in the pathway mycotoxin biosynthesis. Branched-chain amino acid aminotransferase; part of the gene cluster that mediates the biosynthesis of pneumocandins, lipohexapeptides of the echinocandin family that prevent fungal cell wall formation by non-competitive inhibition of beta-1,3-glucan synthase. The 10,12-dimethylmyristoyl side chain is synthesized by the reducing polyketide synthase gloL/GLPKS4. The thioesterase gloN/GLHYD exclusively interacts with gloL/GLPKS4 to maintain turnover of the polyketide side chain. The 10R,12S-dimethylmyristic acid is then transferred to the first thiolation domain of the nonribosomal peptide synthetase gloA/GLNRPS4 by the acyl-AMP ligase gloD/GLligase, followed by its acylation to L-ornithine to trigger elongation of the cyclic hexapeptide. L-ornithine, 4R-hydroxyl-L-proline (generated from L-proline by the dioxygenase gloF/GLOXY2), 3S-hydroxyl-L-homotyrosine (generated by gloG/GLHtyB, gloH/GLHtyA, gloI/GLHtyC, gloJ/GLHtyD and hydroxylated at C-3 by the dioxygenase gloM/GLOXY1), 3R-hydroxyl-L-glutamine (generated from L-glutamine probably by the dioxygenase gloE/GLOXY3) and 3S-hydroxyl-L-proline (generated from L-proline by the dioxygenase gloF/GLOXY2 to yield pneumocandin B0), or 3S-hydroxyl-4S-methyl-L-proline (generated from L-leucine by the dioxygenase gloC/GLOXY4 to yield pneumocandin A0) are sequentially added to the growing chain. The last C domain of gloA/GLNRPS4 is proposed to be responsible for cyclization by condensation to form the peptide bond between L-ornithine and 3S-hydroxyl-4S-methyl-L-proline (for pneumocandin A0) or 3S-hydroxyl-L-proline (for pneumocandin B0). Finally, the subsequent C-4 hydroxylation of 3S-hydroxyl-L-homotyrosine and L-ornithine dihydroxylation at C-4 and C-5 are performed by the cytochrome P450 monooxygenases gloP/GLP450-1 and gloO/GLP450-2, respectively. This chain is Branched-chain amino acid aminotransferase gloG, found in Glarea lozoyensis (strain ATCC 20868 / MF5171).